The sequence spans 103 residues: Large ribosomal subunit protein bL21 (103 aa).

It belongs to the bacterial ribosomal protein bL21 family. As to quaternary structure, part of the 50S ribosomal subunit. Contacts protein L20.

Functionally, this protein binds to 23S rRNA in the presence of protein L20. The chain is Large ribosomal subunit protein bL21 from Pectobacterium carotovorum subsp. carotovorum (strain PC1).